Reading from the N-terminus, the 60-residue chain is uncharacterized protein (60 aa).

Positions 1-21 (MNKLLKLFFITIIIYNNIAFA) are cleaved as a signal peptide.

This is an uncharacterized protein from Rickettsia prowazekii (strain Madrid E).